Consider the following 215-residue polypeptide: Large ribosomal subunit protein uL3 (215 aa).

Gln156 is subject to N5-methylglutamine.

It belongs to the universal ribosomal protein uL3 family. In terms of assembly, part of the 50S ribosomal subunit. Forms a cluster with proteins L14 and L19. Post-translationally, methylated by PrmB.

Functionally, one of the primary rRNA binding proteins, it binds directly near the 3'-end of the 23S rRNA, where it nucleates assembly of the 50S subunit. This is Large ribosomal subunit protein uL3 from Xylella fastidiosa (strain M23).